A 264-amino-acid chain; its full sequence is MDLLERLGLGGRRVLILHHDDLGLTHAQNGAYQALGLPTGSVMVPGAWASGVKGEDLGVHLVLTSEWPAPRMRPLTEGESLRDEAGYFPESLEALWRKARAEEVERELKAQIQAAAKLFSPTHLDAHQGAVLRPDLAEVYLRLAEAYRLVPLVPESLEGLGVPPPFLPELERLLYETPFPQVRFLDPYGLPPEERLGFYLDLAHLPPGLYYLVHHSALPTPEGRALPDWPTREADYFALSHPEVRRVLAEFHPLTWRAVREALF.

Catalysis depends on D20, which acts as the Proton acceptor. D21, H60, and H127 together coordinate Mg(2+). H215 serves as the catalytic Proton donor.

Belongs to the YdjC deacetylase family. As to quaternary structure, homodimer. Mg(2+) serves as cofactor.

Functionally, probably catalyzes the deacetylation of acetylated carbohydrates an important step in the degradation of oligosaccharides. The protein is Carbohydrate deacetylase of Thermus thermophilus (strain ATCC 27634 / DSM 579 / HB8).